A 400-amino-acid chain; its full sequence is Calsequestrin-2 (400 aa).

Positions 1–19 (MKRTHLFIVGVYVLSSCRA) are cleaved as a signal peptide. Position 282 is a phosphotyrosine (Y282). N335 carries N-linked (GlcNAc...) asparagine glycosylation. Positions 365-400 (VLSGKINTEDDDDEDDDDDNSDEEDNDDSDDDDDDE) are disordered. Positions 373–400 (EDDDDEDDDDDNSDEEDNDDSDDDDDDE) are enriched in acidic residues.

Belongs to the calsequestrin family. In terms of assembly, monomer, homodimer and homooligomer. Mostly monomeric in the absence of calcium. Forms higher oligomers in a calcium-dependent manner. Dimers associate to form tetramers, that then form linear homomer chains. Interacts with ASPH and TRDN. Phosphorylation in the C-terminus, probably by CK2, moderately increases calcium buffering capacity. In terms of processing, N-glycosylated.

It localises to the sarcoplasmic reticulum lumen. Functionally, calsequestrin is a high-capacity, moderate affinity, calcium-binding protein and thus acts as an internal calcium store in muscle. Calcium ions are bound by clusters of acidic residues at the protein surface, especially at the interface between subunits. Can bind around 60 Ca(2+) ions. Regulates the release of lumenal Ca(2+) via the calcium release channel RYR2; this plays an important role in triggering muscle contraction. Plays a role in excitation-contraction coupling in the heart and in regulating the rate of heart beats. The chain is Calsequestrin-2 (CASQ2) from Pongo abelii (Sumatran orangutan).